The sequence spans 544 residues: Chaperonin GroEL 3 (544 aa).

Residues 30–33, Lys-51, 87–91, Gly-415, and Asp-496 contribute to the ATP site; these read TLGP and DGTTT.

It belongs to the chaperonin (HSP60) family. In terms of assembly, forms a cylinder of 14 subunits composed of two heptameric rings stacked back-to-back. Interacts with the co-chaperonin GroES.

The protein localises to the cytoplasm. It catalyses the reaction ATP + H2O + a folded polypeptide = ADP + phosphate + an unfolded polypeptide.. Together with its co-chaperonin GroES, plays an essential role in assisting protein folding. The GroEL-GroES system forms a nano-cage that allows encapsulation of the non-native substrate proteins and provides a physical environment optimized to promote and accelerate protein folding. The sequence is that of Chaperonin GroEL 3 from Rhizobium etli (strain ATCC 51251 / DSM 11541 / JCM 21823 / NBRC 15573 / CFN 42).